The sequence spans 609 residues: mRNA-decapping enzyme 1B (609 aa).

At Ala-2 the chain carries N-acetylalanine. Ser-147 is subject to Phosphoserine. A Phosphotyrosine modification is found at Tyr-191. 2 disordered regions span residues Pro-201 to Glu-222 and Thr-243 to Arg-264. Residues Ser-205–Leu-219 show a composition bias toward polar residues. Phosphoserine is present on residues Ser-272 and Ser-333. 2 disordered regions span residues Thr-326–Asn-345 and Thr-359–Val-438. A compositionally biased stretch (polar residues) spans Asn-336–Asn-345. Residues Pro-368–Ala-378 show a composition bias toward low complexity. Phosphothreonine is present on Thr-389. The span at Gln-418–Val-438 shows a compositional bias: polar residues. Ser-440 and Ser-503 each carry phosphoserine.

The protein belongs to the DCP1 family. Interacts with DCP1A.

Its subcellular location is the cytoplasm. It localises to the nucleus. It catalyses the reaction a 5'-end (N(7)-methyl 5'-triphosphoguanosine)-ribonucleoside in mRNA + H2O = N(7)-methyl-GDP + a 5'-end phospho-ribonucleoside in mRNA + 2 H(+). Functionally, may play a role in the degradation of mRNAs, both in normal mRNA turnover and in nonsense-mediated mRNA decay. May remove the 7-methyl guanine cap structure from mRNA molecules, yielding a 5'-phosphorylated mRNA fragment and 7m-GDP. This chain is mRNA-decapping enzyme 1B (DCP1B), found in Pongo abelii (Sumatran orangutan).